Here is a 465-residue protein sequence, read N- to C-terminus: ATP synthase subunit beta (465 aa).

153-160 (GGAGVGKT) provides a ligand contact to ATP.

It belongs to the ATPase alpha/beta chains family. As to quaternary structure, F-type ATPases have 2 components, CF(1) - the catalytic core - and CF(0) - the membrane proton channel. CF(1) has five subunits: alpha(3), beta(3), gamma(1), delta(1), epsilon(1). CF(0) has three main subunits: a(1), b(2) and c(9-12). The alpha and beta chains form an alternating ring which encloses part of the gamma chain. CF(1) is attached to CF(0) by a central stalk formed by the gamma and epsilon chains, while a peripheral stalk is formed by the delta and b chains.

The protein localises to the cell membrane. The catalysed reaction is ATP + H2O + 4 H(+)(in) = ADP + phosphate + 5 H(+)(out). Its function is as follows. Produces ATP from ADP in the presence of a proton gradient across the membrane. The catalytic sites are hosted primarily by the beta subunits. The sequence is that of ATP synthase subunit beta from Clostridium perfringens (strain ATCC 13124 / DSM 756 / JCM 1290 / NCIMB 6125 / NCTC 8237 / Type A).